The primary structure comprises 354 residues: Type II restriction enzyme BanI (354 aa).

As to quaternary structure, homodimer.

It catalyses the reaction Endonucleolytic cleavage of DNA to give specific double-stranded fragments with terminal 5'-phosphates.. Its function is as follows. A P subtype restriction enzyme that recognizes the double-stranded sequence 5'-GGYRCC-3' and cleaves after G-1. The polypeptide is Type II restriction enzyme BanI (banIR) (Aneurinibacillus aneurinilyticus (Bacillus aneurinolyticus)).